The sequence spans 334 residues: Zinc finger Ran-binding domain-containing protein 2 (334 aa).

RanBP2-type zinc fingers lie at residues 9–40 and 65–94; these read SDGDWICPDKKCGNVNFARRTSCNRCGREKTT and SANDWQCKTCGNVNWARRSECNMCNTPKYA. The interval 117–334 is disordered; sequence REESDGEYDE…SGSRTSSKKK (218 aa). Residues 150–163 are compositionally biased toward acidic residues; the sequence is DKESEGEDEEDEDG. Basic residues predominate over residues 196-212; that stretch reads KKKKSNRRSRSKSRSSH. Composition is skewed to low complexity over residues 213–224 and 258–285; these read SRSSSRSSSHSS and SRSSSRSYRGSSTPRKRSYSSSRSSSSP. The span at 302–318 shows a compositional bias: basic residues; that stretch reads RKKRRSRSRSPERRRRS. Over residues 319-334 the composition is skewed to low complexity; the sequence is SSGSSHSGSRTSSKKK.

The protein belongs to the ZRANB2 family.

The protein localises to the nucleus. Functionally, may regulate alternative splicing by interfering with constitutive 5'-splice site selection. The chain is Zinc finger Ran-binding domain-containing protein 2 from Gallus gallus (Chicken).